The primary structure comprises 1035 residues: MYKKVDSSKSFVDIERDVLKLWHEKEIVKKSFNSNQDGEYFSFYDGPPTANGRPHVGHIITRVMKDLIPRYKVMKGYKVPRKAGWDTHGLPVELEIEKKLGISGKPQIEEYGIEKFVKECKESVFSYVSLWKDMSEKLGYWVDMENPYVTYHNDYIESVWWALKQMWDKDLLYKGHKIVPYCPRCGTALSSHEVAQGYKDVKEATAFVKFKVKGEENKYILAWTTTPWTLPSNVALAINKAYDYVEVINNGEHLILAKALLTVLEGEYEVVSEFKGEKLLGMEYEQLFKFANPDKKAFYVVHGDFVTLSDGTGIVHIAPAYGEDDNMLGKKYDLPLINLVNGEGKFVDEVEPWKGLFVKKADPKILEYMKENGTLYKSEKFTHSYPHCWRCDTPLLYYPRDSWFVRMTSLRDKLVENNNKIHWYPDNIRTGRFGKFVENVIDWGISRDRYWGTPLPIWQCECGHRDCVGSIEELKEKGINVPENIELHKPYIDEVKLTCPKCGKPMTRTEEVIDCWFDSGSMPFAQLHYPFENKEVFENTFPAQFISEAVDQTRGWFYTLLAISTSIFDKSSFENCIVLGHVLDKHGLKMSKHKGNVVDPFDVLDNQGADACRWHFYTSSAPWLPTRFSQEDVAETQRKFLSTLWNVYSFYVLYAEIDKFNPNDYKDFVSGNVMDKWIVSRLNTLTKDVGNYLDSYGITQAALEIQDFVDDLSNWYVRRNRSRYWTQELTDDKVGAYVTLYRVLVTLSKVAAPFIPFMTEQIYQSLVTSINEGAEESVHLCKWPEYDESLIDSSLEEEMKLAISIVKLGRSARNGANIKNRQPLYEMRVSTKALPDYYGDIIRDELNVKKVEFGADLSKYVNFEIKPNLPVLGKSYGKLIPKIRKEISSMDQMKLAERVRSGEAVKIDVDGTEIELNSENLLVTMQGLEGFAFAGIGEIGIVLETTITDELREEGYLREVLSKVQNMRKESGFEVADKIEIYVSGNEKLENVIRKFEDTIKKETLATDIIYSENKEAAIYNINGEELNVFVKKNC.

The 'HIGH' region signature appears at 48–58; sequence PTANGRPHVGH. Positions 589 to 593 match the 'KMSKS' region motif; that stretch reads KMSKH. K592 lines the ATP pocket.

The protein belongs to the class-I aminoacyl-tRNA synthetase family. IleS type 2 subfamily. Monomer. Zn(2+) serves as cofactor.

The protein localises to the cytoplasm. It carries out the reaction tRNA(Ile) + L-isoleucine + ATP = L-isoleucyl-tRNA(Ile) + AMP + diphosphate. Functionally, catalyzes the attachment of isoleucine to tRNA(Ile). As IleRS can inadvertently accommodate and process structurally similar amino acids such as valine, to avoid such errors it has two additional distinct tRNA(Ile)-dependent editing activities. One activity is designated as 'pretransfer' editing and involves the hydrolysis of activated Val-AMP. The other activity is designated 'posttransfer' editing and involves deacylation of mischarged Val-tRNA(Ile). The polypeptide is Isoleucine--tRNA ligase (Clostridium acetobutylicum (strain ATCC 824 / DSM 792 / JCM 1419 / IAM 19013 / LMG 5710 / NBRC 13948 / NRRL B-527 / VKM B-1787 / 2291 / W)).